The following is a 399-amino-acid chain: MAEAMELGKDPNGPTHSSTLFVREDGSSMSFYVRPSPAKRRLSTLILHGGGTLCRVQEPGAVLLAQPGEAAAEASGDFISTQYILDCVERNEKLELEAYRLGPAPAAYQAPETKPGVLAGGVAAAEPEPQSQAGRMVFTDADDVAIITYVKEHARSASSVTGNALWKAMEKSSLTQHSWQSMKDRYLKRLRGQEHKYLLGEAPVSPSSQKLKRKAEQDPEAADSGEPQNKRTPDLPEEEFEKEEIKENEAAVKKMLVEATREFEEIVVDESPDFEIHITMCDDDPCTPEEDSETQPDEEEEEEEKVSAPEVGAAIKIIRQLMEKFNLDLSTVTQAFLKNSGELEATSSFLESGQRADGYPIWSRQDDLDLQKDDEATRDALVKKFGAQNVARRIEFRKK.

The segment at 1-21 is disordered; it reads MAEAMELGKDPNGPTHSSTLF. At Ala2 the chain carries N-acetylalanine. The region spanning 10–101 is the BRCT domain; the sequence is DPNGPTHSST…EKLELEAYRL (92 aa). Phosphoserine occurs at positions 36 and 43. Lys114 participates in a covalent cross-link: Glycyl lysine isopeptide (Lys-Gly) (interchain with G-Cter in SUMO2). The region spanning 130–190 is the Myb-like domain; sequence QSQAGRMVFT…SMKDRYLKRL (61 aa). Residues Ser156 and Ser158 each carry the phosphoserine modification. Lys196 participates in a covalent cross-link: Glycyl lysine isopeptide (Lys-Gly) (interchain with G-Cter in SUMO2). Disordered regions lie at residues 199 to 245 and 279 to 309; these read LGEA…KEEI and TMCD…VSAP. Phosphoserine is present on residues Ser205 and Ser208. Glycyl lysine isopeptide (Lys-Gly) (interchain with G-Cter in SUMO2) cross-links involve residues Lys210, Lys214, and Lys242. Positions 281 to 304 are enriched in acidic residues; sequence CDDDPCTPEEDSETQPDEEEEEEE. A Glycyl lysine isopeptide (Lys-Gly) (interchain with G-Cter in SUMO2) cross-link involves residue Lys372. The short motif at 383–399 is the Nuclear localization signal element; sequence KKFGAQNVARRIEFRKK.

Belongs to the RAP1 family. In terms of assembly, associates with the I-kappa-B-kinase (IKK) core complex, composed of CHUK, IKBKB and IKBKG. Homodimer. Component of the shelterin complex (telosome) composed of TERF1, TERF2, TINF2, TERF2IP ACD and POT1. Interacts with TERF2 (but not TERF1) with its C-terminus. Interacts with SLX4/BTBD12. Interacts with TERF2; the interaction is direct.

It localises to the nucleus. The protein resides in the cytoplasm. Its subcellular location is the chromosome. It is found in the telomere. Acts both as a regulator of telomere function and as a transcription regulator. Involved in the regulation of telomere length and protection as a component of the shelterin complex (telosome). In contrast to other components of the shelterin complex, it is dispensible for telomere capping and does not participate in the protection of telomeres against non-homologous end-joining (NHEJ)-mediated repair. Instead, it is required to negatively regulate telomere recombination and is essential for repressing homology-directed repair (HDR), which can affect telomere length. Does not bind DNA directly: recruited to telomeric double-stranded 5'-TTAGGG-3' repeats via its interaction with TERF2. Independently of its function in telomeres, also acts as a transcription regulator: recruited to extratelomeric 5'-TTAGGG-3' sites via its association with TERF2 or other factors, and regulates gene expression. When cytoplasmic, associates with the I-kappa-B-kinase (IKK) complex and acts as a regulator of the NF-kappa-B signaling by promoting IKK-mediated phosphorylation of RELA/p65, leading to activate expression of NF-kappa-B target genes. In Bos taurus (Bovine), this protein is Telomeric repeat-binding factor 2-interacting protein 1 (TERF2IP).